The sequence spans 113 residues: ATP-dependent Clp protease adapter protein ClpS (113 aa).

This sequence belongs to the ClpS family. In terms of assembly, binds to the N-terminal domain of the chaperone ClpA.

Involved in the modulation of the specificity of the ClpAP-mediated ATP-dependent protein degradation. This chain is ATP-dependent Clp protease adapter protein ClpS, found in Corynebacterium diphtheriae (strain ATCC 700971 / NCTC 13129 / Biotype gravis).